Consider the following 1257-residue polypeptide: Bifunctional autolysin (1257 aa).

An N-terminal signal peptide occupies residues 1-29; it reads MAKKFNYKLPSMVALTLVGSAVTAHQVQA. The segment covering 99–137 has biased composition (polar residues); that stretch reads QVNGDTRATQSTTSNNAKPVTKSTNTTAPKTNNNVTSAG. Disordered stretches follow at residues 99–150, 173–217, and 417–441; these read QVNG…NSEN, AAPK…KYKP, and TQST…PSTG. 2 stretches are compositionally biased toward low complexity: residues 173–208 and 419–440; these read AAPK…AAAP and STTT…TPST. Residues 197–776 are N-acetylmuramoyl-L-alanine amidase; that stretch reads ASAQPRSAAA…AVAQPKTAVK (580 aa). 7 consecutive GW domains span residues 444-518, 520-594, 613-687, 689-763, 785-860, 862-937, and 944-1018; these read TVAA…YNTA, SPVN…DTAK, TVSS…YNNA, SPVN…VPAA, TTQT…VQNL, KEVK…APTA, and AAKD…KELI. The interval 777–1257 is endo-beta-N-acetylglucosaminidase; that stretch reads AYAVTKPQTT…GKYFDIPQYK (481 aa).

This sequence in the N-terminal section; belongs to the N-acetylmuramoyl-L-alanine amidase 2 family. It in the C-terminal section; belongs to the glycosyl hydrolase 73 family. In terms of assembly, oligomer; forms a ring structure at the cell surface which is important for efficient partitioning of daughter cells after cell division. Undergoes proteolytic processing to generate the two extracellular lytic enzymes, probably at the septal region on the cell surface.

Its subcellular location is the secreted. The enzyme catalyses Hydrolyzes the link between N-acetylmuramoyl residues and L-amino acid residues in certain cell-wall glycopeptides.. It catalyses the reaction an N(4)-(oligosaccharide-(1-&gt;3)-[oligosaccharide-(1-&gt;6)]-beta-D-Man-(1-&gt;4)-beta-D-GlcNAc-(1-&gt;4)-alpha-D-GlcNAc)-L-asparaginyl-[protein] + H2O = an oligosaccharide-(1-&gt;3)-[oligosaccharide-(1-&gt;6)]-beta-D-Man-(1-&gt;4)-D-GlcNAc + N(4)-(N-acetyl-beta-D-glucosaminyl)-L-asparaginyl-[protein]. Endohydrolysis of the di-N-acetylchitobiosyl unit in high-mannose glycopeptides and glycoproteins containing the -[(Man)5(GlcNAc)2]-Asn structure. One N-acetyl-D-glucosamine residue remains attached to the protein; the rest of the oligosaccharide is released intact. Cleaves the peptidoglycan connecting the daughter cells at the end of the cell division cycle, resulting in the separation of the two newly divided cells. Acts as an autolysin in penicillin-induced lysis. This Staphylococcus aureus (strain MRSA252) protein is Bifunctional autolysin (atl).